A 322-amino-acid polypeptide reads, in one-letter code: Thiamine thiazole synthase (322 aa).

Residues C84, 105-106 (EA), G113, and V178 contribute to the substrate site. Position 211 is a 2,3-didehydroalanine (Cys) (C211). Residues D213, H228, M280, and 290 to 292 (RMG) contribute to the substrate site.

This sequence belongs to the THI4 family. As to quaternary structure, homooctamer. The cofactor is Fe cation. During the catalytic reaction, a sulfide is transferred from Cys-211 to a reaction intermediate, generating a dehydroalanine residue.

The protein resides in the cytoplasm. It is found in the nucleus. It carries out the reaction [ADP-thiazole synthase]-L-cysteine + glycine + NAD(+) = [ADP-thiazole synthase]-dehydroalanine + ADP-5-ethyl-4-methylthiazole-2-carboxylate + nicotinamide + 3 H2O + 2 H(+). Involved in biosynthesis of the thiamine precursor thiazole. Catalyzes the conversion of NAD and glycine to adenosine diphosphate 5-(2-hydroxyethyl)-4-methylthiazole-2-carboxylic acid (ADT), an adenylated thiazole intermediate. The reaction includes an iron-dependent sulfide transfer from a conserved cysteine residue of the protein to a thiazole intermediate. The enzyme can only undergo a single turnover, which suggests it is a suicide enzyme. May have additional roles in adaptation to various stress conditions and in DNA damage tolerance. The protein is Thiamine thiazole synthase of Fusarium vanettenii (strain ATCC MYA-4622 / CBS 123669 / FGSC 9596 / NRRL 45880 / 77-13-4) (Fusarium solani subsp. pisi).